The primary structure comprises 330 residues: Probable cytosolic iron-sulfur protein assembly protein ciao1-A (330 aa).

WD repeat units follow at residues 14–53 (HPDS…WECK), 59–98 (GHQR…FECL), 103–142 (GHEN…EYEC), 148–187 (SHTQ…WECR), 192–231 (GHTS…GGQD), 243–282 (FHGR…DPDQ), and 294–330 (AHSQ…QSEV).

It belongs to the WD repeat CIA1 family. Component of the CIA complex.

Functionally, key component of the cytosolic iron-sulfur protein assembly (CIA) complex, a multiprotein complex that mediates the incorporation of iron-sulfur cluster into extramitochondrial Fe/S proteins. The polypeptide is Probable cytosolic iron-sulfur protein assembly protein ciao1-A (ciao1a) (Salmo salar (Atlantic salmon)).